A 445-amino-acid chain; its full sequence is E3 ubiquitin-protein ligase pellino homolog 3 (445 aa).

The disordered stretch occupies residues 1 to 24 (MVLEGNPDVGSPRTSDLQHPGSQG). Position 11 is a phosphoserine (serine 11). Polar residues predominate over residues 12–24 (PRTSDLQHPGSQG).

This sequence belongs to the pellino family. In terms of assembly, interacts with TRAF6, MAP3K14 and MAP3K7. In terms of processing, phosphorylated by IRAK1 enhancing its E3 ligase activity.

The catalysed reaction is S-ubiquitinyl-[E2 ubiquitin-conjugating enzyme]-L-cysteine + [acceptor protein]-L-lysine = [E2 ubiquitin-conjugating enzyme]-L-cysteine + N(6)-ubiquitinyl-[acceptor protein]-L-lysine.. It functions in the pathway protein modification; protein ubiquitination. E3 ubiquitin ligase catalyzing the covalent attachment of ubiquitin moieties onto substrate proteins. Involved in the TLR and IL-1 signaling pathways via interaction with the complex containing IRAK kinases and TRAF6. Mediates 'Lys-63'-linked polyubiquitination of IRAK1. Can activate AP1/JUN and ELK1. Acts as a regulator of innate immunity by mediating 'Lys-63'-linked polyubiquitination of RIPK2 downstream of NOD1 and NOD2, thereby transforming RIPK2 into a scaffolding protein for downstream effectors, ultimately leading to activation of the NF-kappa-B and MAP kinases signaling. Catalyzes 'Lys-63'-linked polyubiquitination of RIPK2 in parallel of XIAP. This Mus musculus (Mouse) protein is E3 ubiquitin-protein ligase pellino homolog 3.